The chain runs to 40 residues: Putative protein FAM86JP (40 aa).

Residues 1–40 are disordered; that stretch reads MPGAFSQNSSKRRAVLPRSHRVAGRGPAEAGCLPGAPAGS. The span at 10–23 shows a compositional bias: basic residues; it reads SKRRAVLPRSHRVA.

This is Putative protein FAM86JP from Homo sapiens (Human).